The primary structure comprises 825 residues: PR domain zinc finger protein 1 (825 aa).

In terms of domain architecture, SET spans 84–201 (PRNLLFKYAT…ANQELLVWYC (118 aa)). Low complexity predominate over residues 324 to 361 (ITRSPIPSSTTPSPSARSSPDQSLKSSSPHSSPGNTVS). A disordered region spans residues 324–369 (ITRSPIPSSTTPSPSARSSPDQSLKSSSPHSSPGNTVSPVGPGSQE). The interval 527–574 (HVVQPKATSAAMAAPSSDEAMNLIKNKRNMTGYKTLPYPLKKQNGKIK) is interaction with PIAS1. 4 consecutive C2H2-type zinc fingers follow at residues 575–597 (YECN…LRVH), 603–625 (FKCQ…YLVH), 631–653 (HECQ…LRLH), and 659–681 (YQCK…KRLH). Lysine 816 is covalently cross-linked (Glycyl lysine isopeptide (Lys-Gly) (interchain with G-Cter in SUMO1); alternate). Residue lysine 816 forms a Glycyl lysine isopeptide (Lys-Gly) (interchain with G-Cter in SUMO2); alternate linkage.

The protein belongs to the class V-like SAM-binding methyltransferase superfamily. In terms of assembly, interacts with PRMT5. Interacts with FBXO10. Interacts with FBXO11. Interacts with multiple nuclear sumoylation E3 ligases, including CBX4, PIAS1, PIAS2, PIAS3, PIAS4, PML and RNF4, but not RANBP2. Interacts with LDB1, SMARCD3 and SMARCC1. Interacts with EEIG1; following TNFSF11/RANKL stimulation in bone marrow-derived macrophages, the interaction promotes the binding of PRDM1/BLIMP1 to the gene promoter of IRF8. In terms of processing, sumoylation at Lys-816 by PIAS1 augments transcriptional repressor activity, and is critical for plasma cell differentiation. Can be sumoylated with SUMO1 and SUMO2 by PML. Degradation of the wild-type protein mostly depends upon sumoylation, rather than ubiquitination. Desumoylated by SENP1 and SENP6. Post-translationally, ubiquitinated by the SCF(FBXO11) complex, leading to its degradation by the proteasome.

Its subcellular location is the nucleus. It is found in the cytoplasm. Transcription factor that mediates a transcriptional program in various innate and adaptive immune tissue-resident lymphocyte T cell types such as tissue-resident memory T (Trm), natural killer (trNK) and natural killer T (NKT) cells and negatively regulates gene expression of proteins that promote the egress of tissue-resident T-cell populations from non-lymphoid organs. Plays a role in the development, retention and long-term establishment of adaptive and innate tissue-resident lymphocyte T cell types in non-lymphoid organs, such as the skin and gut, but also in other nonbarrier tissues like liver and kidney, and therefore may provide immediate immunological protection against reactivating infections or viral reinfection. Binds specifically to the PRDI element in the promoter of the beta-interferon gene. Drives the maturation of B-lymphocytes into Ig secreting cells. Associates with the transcriptional repressor ZNF683 to chromatin at gene promoter regions. Binds to the promoter and acts as a transcriptional repressor of IRF8, thereby promotes transcription of osteoclast differentiation factors such as NFATC1 and EEIG1. The sequence is that of PR domain zinc finger protein 1 (PRDM1) from Homo sapiens (Human).